The following is a 64-amino-acid chain: Large ribosomal subunit protein bL33c (64 aa).

This sequence belongs to the bacterial ribosomal protein bL33 family.

The protein localises to the plastid. The protein resides in the organellar chromatophore. The sequence is that of Large ribosomal subunit protein bL33c from Paulinella chromatophora.